The chain runs to 444 residues: Tol-Pal system protein TolB (444 aa).

A signal peptide spans 1–31; sequence MSFDLNRRQLMISAATAAGALALGPARDAFG.

It belongs to the TolB family. In terms of assembly, the Tol-Pal system is composed of five core proteins: the inner membrane proteins TolA, TolQ and TolR, the periplasmic protein TolB and the outer membrane protein Pal. They form a network linking the inner and outer membranes and the peptidoglycan layer.

The protein resides in the periplasm. Its function is as follows. Part of the Tol-Pal system, which plays a role in outer membrane invagination during cell division and is important for maintaining outer membrane integrity. The chain is Tol-Pal system protein TolB from Rhodopseudomonas palustris (strain ATCC BAA-98 / CGA009).